The following is a 100-amino-acid chain: Large ribosomal subunit protein uL23 (100 aa).

This sequence belongs to the universal ribosomal protein uL23 family. Part of the 50S ribosomal subunit. Contacts protein L29, and trigger factor when it is bound to the ribosome.

One of the early assembly proteins it binds 23S rRNA. One of the proteins that surrounds the polypeptide exit tunnel on the outside of the ribosome. Forms the main docking site for trigger factor binding to the ribosome. This Pseudoalteromonas translucida (strain TAC 125) protein is Large ribosomal subunit protein uL23.